A 295-amino-acid chain; its full sequence is Nitrogenase iron protein (295 aa).

11–18 (GKGGIGKS) contacts ATP. C99 is a binding site for [4Fe-4S] cluster. ADP-ribosylarginine; by dinitrogenase reductase ADP-ribosyltransferase is present on R102. C133 provides a ligand contact to [4Fe-4S] cluster.

This sequence belongs to the NifH/BchL/ChlL family. Homodimer. The cofactor is [4Fe-4S] cluster. Post-translationally, the reversible ADP-ribosylation of Arg-102 inactivates the nitrogenase reductase and regulates nitrogenase activity.

The catalysed reaction is N2 + 8 reduced [2Fe-2S]-[ferredoxin] + 16 ATP + 16 H2O = H2 + 8 oxidized [2Fe-2S]-[ferredoxin] + 2 NH4(+) + 16 ADP + 16 phosphate + 6 H(+). Functionally, the key enzymatic reactions in nitrogen fixation are catalyzed by the nitrogenase complex, which has 2 components: the iron protein and the molybdenum-iron protein. The chain is Nitrogenase iron protein from Zymomonas mobilis subsp. mobilis (strain ATCC 31821 / ZM4 / CP4).